A 386-amino-acid chain; its full sequence is Diels-Alderase phm7 (386 aa).

The interval 1–223 (MSEPTSSSSL…MVRGWSARPW (223 aa)) is beta-sandwich motif. Residues E51, N84, and K356 each contribute to the substrate site. Positions 223–386 (WPTFMNDAYY…FGGQLQIPVP (164 aa)) are beta-barrel motif.

It belongs to the Diels-Alderase family.

It participates in secondary metabolite biosynthesis. 3-aminomethyl-p-menthane which is similar to the phomasetin substructure, dose-dependently inhibits phm7 activity in vitro and production of phomasetin in the fungus. Functionally, diels-Alderase; part of the gene cluster that mediates the biosynthesis of the trans-fused decalin-containing tetramic acid phomasetin, the stereochemical opposite of the HIV-1 integrase inhibitor equisetin. The PKS module of phm1 together with the enoylreductase phm4 catalyze the formation of the polyketide unit which is then conjugated to L-serine by the condensation domain of the phm1 NRPS module. Activity of the Dieckmann cyclase domain (RED) of phm1 results in release of the Dieckmann product intermediate. The Diels-Alderase phm7 then uses the Dieckmann product of phm1 as substrate and catalyzes the Diels-Alder cycloaddition to form the decalin ring of N-desmethylphomasetin. N-desmethylphomasetin is further methylated to phomasetin by the methyltransferase phm5. The protein is Diels-Alderase phm7 of Pyrenochaetopsis sp.